A 360-amino-acid chain; its full sequence is Magnesium transporter NIPA2 (360 aa).

Over 1 to 9 (MSQGHGKYD) the chain is Extracellular. The helical transmembrane segment at 10-30 (FYIGLGLAMSSSIFIGGSFIL) threads the bilayer. Residues 31 to 56 (KKKGLLRLARKGSTRAGQGGHAYLKE) lie on the Cytoplasmic side of the membrane. A helical membrane pass occupies residues 57-77 (WLWWAGLLSMGAGEVANFAAY). Residue A78 is a topological domain, extracellular. The chain crosses the membrane as a helical span at residues 79 to 99 (FAPATLVTPLGALSVLVSAIL). Over 100-107 (SSYFLNER) the chain is Cytoplasmic. Residues 108–128 (LNLHGKIGCLLSILGSTVMVI) traverse the membrane as a helical segment. Residues 129-149 (HAPKEEEIETLNEMSHKLGDP) lie on the Extracellular side of the membrane. The helical transmembrane segment at 150–170 (GFVVFATLVVIVSLILIFVVG) threads the bilayer. Topologically, residues 171–175 (PRHGQ) are cytoplasmic. The helical transmembrane segment at 176 to 196 (TNILVYITICSVIGAVSVSCA) threads the bilayer. Residues 197-215 (KGLGIAIKELFAGKPVLQH) lie on the Extracellular side of the membrane. The helical transmembrane segment at 216-236 (PLTWILLLSLIVCVSTQINYL) threads the bilayer. The Cytoplasmic portion of the chain corresponds to 237-246 (NRALDIFNTS). A helical transmembrane segment spans residues 247 to 267 (IVTPIYYVFFTTSVITCSAIL). Residues 268 to 278 (FKEWQDMPVDD) lie on the Extracellular side of the membrane. The helical transmembrane segment at 279–299 (VIGTLSGFFTIIVGIFLLHAF) threads the bilayer. Over 300–360 (KDVSFSLSSL…SRRNGNLTAF (61 aa)) the chain is Cytoplasmic.

This sequence belongs to the NIPA family.

Its subcellular location is the cell membrane. The protein resides in the early endosome. The enzyme catalyses Mg(2+)(in) = Mg(2+)(out). In terms of biological role, acts as a selective Mg(2+) transporter. This is Magnesium transporter NIPA2 (NIPA2) from Bos taurus (Bovine).